The primary structure comprises 243 residues: Small ribosomal subunit protein uS3 (243 aa).

Positions Ile39–Glu110 constitute a KH type-2 domain. The interval Gln217–Gly243 is disordered. The span at Gln234–Gly243 shows a compositional bias: basic and acidic residues.

The protein belongs to the universal ribosomal protein uS3 family. In terms of assembly, part of the 30S ribosomal subunit. Forms a tight complex with proteins S10 and S14.

Its function is as follows. Binds the lower part of the 30S subunit head. Binds mRNA in the 70S ribosome, positioning it for translation. The protein is Small ribosomal subunit protein uS3 of Synechococcus sp. (strain WH7803).